The following is a 124-amino-acid chain: Biogenesis of lysosome-related organelles complex 1 subunit CNL1 (124 aa).

Positions methionine 1–aspartate 20 are disordered. Residues isoleucine 75–valine 98 adopt a coiled-coil conformation.

This sequence belongs to the BLOC1S4 family. As to quaternary structure, component of the biogenesis of lysosome-related organelles complex-1 (BLOC-1).

The protein resides in the cytoplasm. Functionally, component of the biogenesis of lysosome-related organelles complex-1 (BLOC-1), a complex that is involved in endosomal cargo sorting. The protein is Biogenesis of lysosome-related organelles complex 1 subunit CNL1 (CLN1) of Kluyveromyces lactis (strain ATCC 8585 / CBS 2359 / DSM 70799 / NBRC 1267 / NRRL Y-1140 / WM37) (Yeast).